Reading from the N-terminus, the 193-residue chain is MNFLAHLHLAHLAESSLSGNLLADFVRGNPEESFPPDVVAGIHMHRRIDVLTDNLPEVREAREWFRNETRRVAPITLDVMWDHFLSRHWSQLSPDFPLQEFTCYAREQVMTILPDSPQRFINLNNYLWSEQWLVRYRDMDFIQSVLNGMASRRPRLDALRDSWYDLDAHYDALETRFWQFYPRMMEQASRKAL.

This sequence belongs to the AcpH family.

It catalyses the reaction holo-[ACP] + H2O = apo-[ACP] + (R)-4'-phosphopantetheine + H(+). In terms of biological role, converts holo-ACP to apo-ACP by hydrolytic cleavage of the phosphopantetheine prosthetic group from ACP. This chain is Acyl carrier protein phosphodiesterase, found in Escherichia coli O6:H1 (strain CFT073 / ATCC 700928 / UPEC).